The following is a 778-amino-acid chain: Receptor like protein 28 (778 aa).

Residues 1–24 (MSGSHLRLRFLSLLLLCCVSSSTS) form the signal peptide. Topologically, residues 25–739 (SLFTFSYPVL…EEQEQVLNWK (715 aa)) are extracellular. N-linked (GlcNAc...) asparagine glycans are attached at residues Asn-60, Asn-72, Asn-93, Asn-106, Asn-111, Asn-147, Asn-170, and Asn-173. LRR repeat units follow at residues 99 to 123 (FHQL…EFGN), 125 to 147 (NKVE…SFSN), 148 to 171 (LSQL…VQNL), 172 to 195 (TNLS…LLMM), and 197 to 219 (FLSY…TSSK). An LRR 6; degenerate repeat occupies 220–240 (LEILYLGLKPFEGQILEPISK). LRR repeat units follow at residues 241–265 (LINL…LFSS), 266–291 (LKSL…LYIP), 293–313 (TLEK…ILKT), 314–338 (LQKL…LWRL), 340–363 (RLRS…VLVN), and 364–387 (SSME…PLSI). N-linked (GlcNAc...) asparagine glycosylation is present at Asn-253. N-linked (GlcNAc...) asparagine glycosylation is found at Asn-348 and Asn-363. An LRR 13; degenerate repeat occupies 388–407 (KAFSAGYNNFSGEIPLSICN). N-linked (GlcNAc...) asparagine glycans are attached at residues Asn-396, Asn-407, Asn-420, Asn-431, and Asn-476. LRR repeat units lie at residues 408 to 429 (RSSL…PQCL), 430 to 453 (SNLT…LCAG), 455 to 477 (SLQT…LLNC), 479 to 500 (SLEF…WLKA), 501 to 525 (LPNL…HQSP), 528 to 552 (FPEL…YFVN), 601 to 625 (LNSY…IGLL), 626 to 649 (KELI…LANA), 650 to 673 (TELE…LKTL), and 678 to 700 (YINV…SSFE). 2 N-linked (GlcNAc...) asparagine glycosylation sites follow: Asn-632 and Asn-648. Asn-680 carries an N-linked (GlcNAc...) asparagine glycan. A helical transmembrane segment spans residues 740–760 (AVATGYGTGLLLGLAIAQVIA). Residues 761–778 (SYKPDWLVKIIGLFRFCF) are Cytoplasmic-facing.

The protein belongs to the RLP family.

The protein localises to the cell membrane. This Arabidopsis thaliana (Mouse-ear cress) protein is Receptor like protein 28.